The following is a 136-amino-acid chain: MLQPKRMKFRKMFKGRNRGLANGTEVSFGDFGLKAVGRGRLTARQIEAARRAMTRHIKRQGQIWIRVFPDKPITSKPLEVRMGKGKGNVEYWVCQIQPGKVLYEMDGVSEELAREAFALAAAKLPLKTTFVTKTVM.

Belongs to the universal ribosomal protein uL16 family. In terms of assembly, part of the 50S ribosomal subunit.

Functionally, binds 23S rRNA and is also seen to make contacts with the A and possibly P site tRNAs. In Shewanella woodyi (strain ATCC 51908 / MS32), this protein is Large ribosomal subunit protein uL16.